Here is a 476-residue protein sequence, read N- to C-terminus: Cysteine--tRNA ligase (476 aa).

C36 is a Zn(2+) binding site. Positions 38-48 match the 'HIGH' region motif; it reads PTVYDYAHIGN. Zn(2+) contacts are provided by C221, H246, and E250. The 'KMSKS' region motif lies at 278–282; that stretch reads KMSKS. Position 281 (K281) interacts with ATP.

The protein belongs to the class-I aminoacyl-tRNA synthetase family. As to quaternary structure, monomer. Requires Zn(2+) as cofactor.

It is found in the cytoplasm. It carries out the reaction tRNA(Cys) + L-cysteine + ATP = L-cysteinyl-tRNA(Cys) + AMP + diphosphate. The protein is Cysteine--tRNA ligase of Chlamydia caviae (strain ATCC VR-813 / DSM 19441 / 03DC25 / GPIC) (Chlamydophila caviae).